The following is a 436-amino-acid chain: Hydrogenobyrinate a,c-diamide synthase (436 aa).

The GATase cobBQ-type domain maps to 244-435; the sequence is RIAVARDDAF…MHVIDFSGEA (192 aa). Catalysis depends on cysteine 327, which acts as the Nucleophile.

Belongs to the CobB/CbiA family. Mg(2+) is required as a cofactor.

The enzyme catalyses hydrogenobyrinate + 2 L-glutamine + 2 ATP + 2 H2O = hydrogenobyrinate a,c-diamide + 2 L-glutamate + 2 ADP + 2 phosphate + 2 H(+). Its pathway is cofactor biosynthesis; adenosylcobalamin biosynthesis; cob(II)yrinate a,c-diamide from precorrin-2 (aerobic route): step 9/10. Catalyzes the ATP-dependent amidation of the two carboxylate groups at positions a and c of hydrogenobyrinate, using either L-glutamine or ammonia as the nitrogen source. The protein is Hydrogenobyrinate a,c-diamide synthase of Brucella ovis (strain ATCC 25840 / 63/290 / NCTC 10512).